Here is a 296-residue protein sequence, read N- to C-terminus: NAD kinase (296 aa).

Catalysis depends on aspartate 73, which acts as the Proton acceptor. Residues 73–74, lysine 78, 151–152, arginine 178, aspartate 180, and 191–196 contribute to the NAD(+) site; these read DG, NE, and TAHAMS.

The protein belongs to the NAD kinase family. A divalent metal cation serves as cofactor.

The protein resides in the cytoplasm. The enzyme catalyses NAD(+) + ATP = ADP + NADP(+) + H(+). In terms of biological role, involved in the regulation of the intracellular balance of NAD and NADP, and is a key enzyme in the biosynthesis of NADP. Catalyzes specifically the phosphorylation on 2'-hydroxyl of the adenosine moiety of NAD to yield NADP. This is NAD kinase from Francisella tularensis subsp. novicida (strain U112).